We begin with the raw amino-acid sequence, 226 residues long: Leucyl/phenylalanyl-tRNA--protein transferase (226 aa).

Belongs to the L/F-transferase family.

It localises to the cytoplasm. The enzyme catalyses N-terminal L-lysyl-[protein] + L-leucyl-tRNA(Leu) = N-terminal L-leucyl-L-lysyl-[protein] + tRNA(Leu) + H(+). It catalyses the reaction N-terminal L-arginyl-[protein] + L-leucyl-tRNA(Leu) = N-terminal L-leucyl-L-arginyl-[protein] + tRNA(Leu) + H(+). The catalysed reaction is L-phenylalanyl-tRNA(Phe) + an N-terminal L-alpha-aminoacyl-[protein] = an N-terminal L-phenylalanyl-L-alpha-aminoacyl-[protein] + tRNA(Phe). Functions in the N-end rule pathway of protein degradation where it conjugates Leu, Phe and, less efficiently, Met from aminoacyl-tRNAs to the N-termini of proteins containing an N-terminal arginine or lysine. This is Leucyl/phenylalanyl-tRNA--protein transferase from Pseudomonas fluorescens (strain SBW25).